The following is a 387-amino-acid chain: Yellow-related salivary protein ASP2 (387 aa).

An N-terminal signal peptide occupies residues 1-18 (MKIFLCLIVVVSLQGVLA).

The protein belongs to the major royal jelly protein family. Female salivary gland (at protein level).

The protein localises to the secreted. In terms of biological role, probably modulates blood feeding of sand flies on vertebrate species by binding and sequestering different mediators involved in the host response. Binds biogenic amines. Binds octopamine with high affinity. Binds serotonin and dopamine with medium affinity. Poorly binds histamine. Does not bind noradrenaline and adrenaline. This is Yellow-related salivary protein ASP2 from Phlebotomus orientalis (Phlebotomine sand fly).